Consider the following 294-residue polypeptide: Pyrroline-5-carboxylate reductase (294 aa).

Belongs to the pyrroline-5-carboxylate reductase family.

It is found in the cytoplasm. It catalyses the reaction L-proline + NADP(+) = (S)-1-pyrroline-5-carboxylate + NADPH + 2 H(+). It carries out the reaction L-proline + NAD(+) = (S)-1-pyrroline-5-carboxylate + NADH + 2 H(+). Its pathway is amino-acid biosynthesis; L-proline biosynthesis; L-proline from L-glutamate 5-semialdehyde: step 1/1. In terms of biological role, catalyzes the reduction of 1-pyrroline-5-carboxylate (PCA) to L-proline. This chain is Pyrroline-5-carboxylate reductase, found in Mycobacterium leprae (strain TN).